We begin with the raw amino-acid sequence, 385 residues long: Xanthosine methyltransferase 2 (385 aa).

Tyrosine 18 is a binding site for S-adenosyl-L-homocysteine. The xanthosine site is built by asparagine 21 and asparagine 25. Cysteine 62, asparagine 67, aspartate 101, leucine 102, serine 140, phenylalanine 141, and cysteine 157 together coordinate S-adenosyl-L-homocysteine. Residue tyrosine 158 coordinates xanthosine. Cysteine 159 contributes to the S-adenosyl-L-homocysteine binding site. Residues histidine 161 and tryptophan 162 each coordinate xanthosine. Asparagine 179, aspartate 261, phenylalanine 263, and asparagine 264 together coordinate Mg(2+). The xanthosine site is built by serine 329, tyrosine 334, and tyrosine 369.

It belongs to the methyltransferase superfamily. Type-7 methyltransferase family. Requires Mg(2+) as cofactor. As to expression, expressed at low levels in young leaves but not in mature leaves. Barely detectable in fruits (grains).

It catalyses the reaction xanthosine + S-adenosyl-L-methionine = 7-methylxanthosine + S-adenosyl-L-homocysteine. The protein operates within alkaloid biosynthesis. Functionally, involved in the biosynthesis of caffeine. Specific for xanthosine and could not use xanthosine 5'-monophosphate (XMP) as substrate. Catalyzes the 7-N-methylation activity of xanthosine, but does not have 1-N- or 3-N-methylation activity. This Coffea arabica (Arabian coffee) protein is Xanthosine methyltransferase 2.